A 100-amino-acid polypeptide reads, in one-letter code: MIIMNLQIFAHKKGMGSSKNGRDSESKRLGTKSADGQFVLAGNILVRQRGTKIHPGKNVGRGSDDTLFSKIDGIVRYERFGKTKKKASVYPLEVEELVAE.

A propeptide spanning residues 1-9 is cleaved from the precursor; sequence MIIMNLQIF. The disordered stretch occupies residues 13–32; it reads KGMGSSKNGRDSESKRLGTK.

Belongs to the bacterial ribosomal protein bL27 family. The N-terminus is cleaved by ribosomal processing cysteine protease Prp.

In Clostridium kluyveri (strain ATCC 8527 / DSM 555 / NBRC 12016 / NCIMB 10680 / K1), this protein is Large ribosomal subunit protein bL27.